Here is a 369-residue protein sequence, read N- to C-terminus: Arsenite methyltransferase (369 aa).

At Ser-46 the chain carries Phosphoserine.

It belongs to the methyltransferase superfamily. Arsenite methyltransferase family.

Its subcellular location is the cytoplasm. It localises to the cytosol. The catalysed reaction is arsenic triglutathione + [thioredoxin]-dithiol + S-adenosyl-L-methionine + 2 H2O = methylarsonous acid + [thioredoxin]-disulfide + 3 glutathione + S-adenosyl-L-homocysteine + H(+). It catalyses the reaction arsenic triglutathione + 2 [thioredoxin]-dithiol + 2 S-adenosyl-L-methionine + H2O = dimethylarsinous acid + 2 [thioredoxin]-disulfide + 3 glutathione + 2 S-adenosyl-L-homocysteine + 2 H(+). It carries out the reaction arsenic triglutathione + 3 [thioredoxin]-dithiol + 3 S-adenosyl-L-methionine = trimethylarsine + 3 [thioredoxin]-disulfide + 3 glutathione + 3 S-adenosyl-L-homocysteine + 3 H(+). In terms of biological role, catalyzes the transfer of a methyl group from AdoMet to trivalent arsenicals producing methylated and dimethylated arsenicals. It methylates arsenite to form methylarsonate, Me-AsO(3)H(2), which is reduced by methylarsonate reductase to methylarsonite, Me-As(OH)2. Methylarsonite is also a substrate and it is converted into the much less toxic compound dimethylarsinate (cacodylate), Me(2)As(O)-OH. The protein is Arsenite methyltransferase (As3mt) of Rattus norvegicus (Rat).